Consider the following 3394-residue polypeptide: Protein PFC0760c (3394 aa).

Low complexity-rich tracts occupy residues 471–508 (NNNDNDNNNDNNNNNNNNNDNNNNNNNDNNNNNNNYNN), 515–528 (NMNSGNHPNSNNLH), and 786–841 (NNQN…NQNN). Disordered stretches follow at residues 471 to 539 (NNND…DENN), 779 to 844 (MSSN…NAGI), 1038 to 1099 (NKKK…NNDD), 1892 to 1918 (TTTTTNNNNNNDNNNDNNNDNNDNNND), 2648 to 2693 (KMDL…DNHL), 2835 to 2909 (AKNE…NSNN), 3000 to 3057 (VSVG…DVNT), and 3107 to 3394 (DYVN…NSEE). Positions 1038–1097 (NKKKNNDGDNKSQEDDDGNKKKNNDGDNKSQEDDDGNKKKNNDGDNKSQEDDYGNKKKNN) are enriched in basic and acidic residues. Residues 2657–2671 (GDDDDDDDDDDDDDN) show a composition bias toward acidic residues. Residues 2672 to 2686 (NNNNNNNNNNNNNNM) show a composition bias toward low complexity. The span at 2836 to 2846 (KNENYPVSTHY) shows a compositional bias: polar residues. Low complexity-rich tracts occupy residues 2855 to 2865 (DNINNDNNNDN) and 2872 to 2909 (NDNINNDNNNDNINNDNINNDNINNDNNNDNNNDNSNN). 2 stretches are compositionally biased toward acidic residues: residues 3007–3047 (DNND…EEKE) and 3147–3257 (DDDE…DDND). The segment covering 3258-3292 (NDHNDDNNDEEKYSCHDDKNEHTNNDLLNIDHDNN) has biased composition (basic and acidic residues). Residues 3300–3309 (LYSTYNVSVS) show a composition bias toward polar residues. Positions 3310 to 3320 (HNKDPSNKENE) are enriched in basic and acidic residues. Over residues 3321–3330 (IQNLISIDSS) the composition is skewed to polar residues. Over residues 3331 to 3379 (NENDENDENDENDENDENDENDENDENDENDENDEKDENDENDENDENF) the composition is skewed to acidic residues. The span at 3385 to 3394 (GTLNEMNSEE) shows a compositional bias: polar residues.

The protein is Protein PFC0760c of Plasmodium falciparum (isolate 3D7).